Here is a 369-residue protein sequence, read N- to C-terminus: 3-isopropylmalate dehydrogenase (369 aa).

NAD(+) is bound at residue 77-90 (GPKYDVLDFSVKPE). Substrate-binding residues include Arg97, Arg107, Arg135, and Asp226. Positions 226, 250, and 254 each coordinate Mg(2+). 289 to 301 (GSAPDIAGQGKAN) is a binding site for NAD(+).

This sequence belongs to the isocitrate and isopropylmalate dehydrogenases family. LeuB type 1 subfamily. As to quaternary structure, homodimer. It depends on Mg(2+) as a cofactor. Mn(2+) is required as a cofactor.

The protein localises to the cytoplasm. The catalysed reaction is (2R,3S)-3-isopropylmalate + NAD(+) = 4-methyl-2-oxopentanoate + CO2 + NADH. It functions in the pathway amino-acid biosynthesis; L-leucine biosynthesis; L-leucine from 3-methyl-2-oxobutanoate: step 3/4. In terms of biological role, catalyzes the oxidation of 3-carboxy-2-hydroxy-4-methylpentanoate (3-isopropylmalate) to 3-carboxy-4-methyl-2-oxopentanoate. The product decarboxylates to 4-methyl-2 oxopentanoate. The protein is 3-isopropylmalate dehydrogenase of Cereibacter sphaeroides (strain ATCC 17023 / DSM 158 / JCM 6121 / CCUG 31486 / LMG 2827 / NBRC 12203 / NCIMB 8253 / ATH 2.4.1.) (Rhodobacter sphaeroides).